Reading from the N-terminus, the 305-residue chain is Spermatogenesis-associated protein 4 (305 aa).

A Calponin-homology (CH) domain is found at 49-155 (SRLSRSVLRW…EEVYTLLTHR (107 aa)).

Highly expressed in testis, the expression is observed precisely in seminiferous tubules.

It localises to the nucleus. In terms of biological role, may play a role in apoptosis regulation. In Homo sapiens (Human), this protein is Spermatogenesis-associated protein 4 (SPATA4).